The primary structure comprises 149 residues: Large ribosomal subunit protein uL11 (149 aa).

Belongs to the universal ribosomal protein uL11 family. Part of the ribosomal stalk of the 50S ribosomal subunit. Interacts with L10 and the large rRNA to form the base of the stalk. L10 forms an elongated spine to which L12 dimers bind in a sequential fashion forming a multimeric L10(L12)X complex. One or more lysine residues are methylated.

In terms of biological role, forms part of the ribosomal stalk which helps the ribosome interact with GTP-bound translation factors. The protein is Large ribosomal subunit protein uL11 of Azorhizobium caulinodans (strain ATCC 43989 / DSM 5975 / JCM 20966 / LMG 6465 / NBRC 14845 / NCIMB 13405 / ORS 571).